Consider the following 43-residue polypeptide: DEEVGCFPNVCKNDGNCSIETSTGMTRCQCLEGYTGHVCENPL.

The region spanning Glu-2–Glu-40 is the EGF-like domain. Disulfide bonds link Cys-6/Cys-28, Cys-11/Cys-30, and Cys-17/Cys-39.

As to expression, expressed by the venom duct.

Its subcellular location is the secreted. In Hastula hectica (Sea snail), this protein is Augerpeptide hhe9.2.